Reading from the N-terminus, the 229-residue chain is MAKKSKQLRAALEKIDSTKAYSVEEAVALAKETNFAKFDATVEVAYNLNIDVKKADQQIRGAMVLPHGTGKTARVLVFARGAKAEEAKAAGADFVGEDDLVAKINDGWLDFDVVIATPDMMALVGRLGRVLGPRNLMPNPKTGTVTMDVAKAVEESKGGKITYRADRAGIVQAIIGKVSFDADKLAENFKAFNEVIQKAKPATAKGTYVTSLTITTTQGPGIKVDVNSL.

Belongs to the universal ribosomal protein uL1 family. Part of the 50S ribosomal subunit.

Its function is as follows. Binds directly to 23S rRNA. The L1 stalk is quite mobile in the ribosome, and is involved in E site tRNA release. Protein L1 is also a translational repressor protein, it controls the translation of the L11 operon by binding to its mRNA. In Streptococcus gordonii (strain Challis / ATCC 35105 / BCRC 15272 / CH1 / DL1 / V288), this protein is Large ribosomal subunit protein uL1.